The sequence spans 667 residues: WD repeat-containing protein 48 homolog (667 aa).

8 WD repeats span residues 26–65 (QHRNGVNALQLDANNGKLYSAGRDAIIRVWNTRTESNEKY), 71–110 (HHNDWVNDIVLCCNGRNLISASCDTTVKVWNAQKGFCMST), 113–152 (THRDYVQALAYAKDREQVASAGLDKAIFLWDVNTLTALTA), 164–203 (GSKDSIYSLAMNPSGTVIVSGSTENILRIWDPRTCMRSMK), 206–245 (GHTENVRCLVVSPDGNQVVSGSSDGTIKVWNLGQQRCVQT), 248–287 (VHKEGVWSLLMSENFQYIISGSRDRNIIVTEMRNPSNKML), 290–329 (EEQAPVLSLGYNIDKTGVWATTWNSDIRCWKLPMYDRCTL), and 350–389 (KGGAAIKECTVLNDKRYIITKDSQDQVVVYDVLRVVKKEQ). Residues 591 to 615 (ETTPSGGNANNSLQNSQSDANSEGS) are disordered.

This sequence belongs to the WD repeat WDR48 family. In terms of assembly, catalytic component of the Usp12-46 deubiquitylase complex consisting of Usp12-46, Wdr20 and Uaf1; regulatory subunit that, together wtih Wdr20, stabilizes Usp12-46. The Usp12-46 deubiquitylase complex associates with arr/arrow; the interaction leads to deubiquitination and stabilization of arr/arrow.

In terms of biological role, regulatory component of the Usp12-46 deubiquitylase complex. activates deubiquitination by increasing the catalytic turnover without increasing the affinity of deubiquitinating enzymes for the substrate. The complex deubiquitylates the wg/wingless-signaling receptor arr/arrow, which stabilizes the receptor and increases its concentration at the cell surface; this enhances the sensitivity of cells to wg/wingless-signal stimulation. This increases the amplitude and spatial range of the signaling response to the wg/wingless morphogen gradient, facilitating the precise concentration-dependent regulation of its target genes. Together with Wdr20 and Usp12-46 required for wg/wingless-mediated signaling in the wing imaginal disc and for wg/wingless-dependent regulation of intestinal stem cell proliferation. This Drosophila ananassae (Fruit fly) protein is WD repeat-containing protein 48 homolog.